Here is a 37-residue protein sequence, read N- to C-terminus: Esculentin-2B (37 aa).

A disulfide bridge connects residues Cys31 and Cys37.

This sequence belongs to the frog skin active peptide (FSAP) family. Esculentin subfamily. As to expression, expressed by the skin glands.

The protein localises to the secreted. Shows antibacterial activity against representative Gram-negative and Gram-positive bacterial species, and hemolytic activity. The polypeptide is Esculentin-2B (Pelophylax lessonae (Pool frog)).